The following is a 339-amino-acid chain: MTIQKNWQELIRPNKLQVTPGSDPSRFATLVAEPLERGFGQTLGNALRRVLLSSLQGAAVQSVHIDGVLHEFSSIAGVREDVTDIVLNIKDISIKMQGEGPKRMVIKKQGPGVVTAGDIQTVGDVVVLNPELQLCTLDDGAEIRMEFTVDTGKGYVAADRNRPEDAPIGLIPVDSLFSPVRKVSYKVENTREGQILDYDKLTLTIETNGAITPEDALAYSARILQDQLNVFVNFEEPRKEVVQEIIPDLAFNPAFLKKVDELELSVRSANCLKNDNIVYIGDLVQKSEAEMLRTPNFGRKSLNEIKEVLAQMGLHLGMEVPGWPPENIDELAKRFEDHY.

Residues 1–235 form an alpha N-terminal domain (alpha-NTD) region; the sequence is MTIQKNWQEL…DQLNVFVNFE (235 aa). An alpha C-terminal domain (alpha-CTD) region spans residues 251–339; it reads FNPAFLKKVD…ELAKRFEDHY (89 aa).

This sequence belongs to the RNA polymerase alpha chain family. As to quaternary structure, homodimer. The RNAP catalytic core consists of 2 alpha, 1 beta, 1 beta' and 1 omega subunit. When a sigma factor is associated with the core the holoenzyme is formed, which can initiate transcription.

It carries out the reaction RNA(n) + a ribonucleoside 5'-triphosphate = RNA(n+1) + diphosphate. Its function is as follows. DNA-dependent RNA polymerase catalyzes the transcription of DNA into RNA using the four ribonucleoside triphosphates as substrates. In Afipia carboxidovorans (strain ATCC 49405 / DSM 1227 / KCTC 32145 / OM5) (Oligotropha carboxidovorans), this protein is DNA-directed RNA polymerase subunit alpha.